A 174-amino-acid chain; its full sequence is Peptide deformylase (174 aa).

Fe cation-binding residues include C98 and H140. E141 is a catalytic residue. Residue H144 coordinates Fe cation.

Belongs to the polypeptide deformylase family. Fe(2+) is required as a cofactor.

It carries out the reaction N-terminal N-formyl-L-methionyl-[peptide] + H2O = N-terminal L-methionyl-[peptide] + formate. Removes the formyl group from the N-terminal Met of newly synthesized proteins. Requires at least a dipeptide for an efficient rate of reaction. N-terminal L-methionine is a prerequisite for activity but the enzyme has broad specificity at other positions. The chain is Peptide deformylase from Bradyrhizobium diazoefficiens (strain JCM 10833 / BCRC 13528 / IAM 13628 / NBRC 14792 / USDA 110).